Here is a 61-residue protein sequence, read N- to C-terminus: [Thr6]-bradykinyl-Val,Asp (61 aa).

Residues 1–22 (MSFLKKSLFLVLFLGFVSFSIC) form the signal peptide. Residues 23–50 (EEEKREDEEEENEREENKESEEKRNQEE) constitute a propeptide that is removed on maturation. A disordered region spans residues 24–61 (EEKREDEEEENEREENKESEEKRNQEERPPGFTPFRVD). Residues 26–36 (KREDEEEENER) are compositionally biased toward acidic residues. The span at 37–52 (EENKESEEKRNQEERP) shows a compositional bias: basic and acidic residues. Pro-53 carries the post-translational modification 4-hydroxyproline; in form [Hyp3,Thr6]-bradykinyl-Val,Asp and [Hyp3,Thr6]-bradykinin.

This sequence belongs to the frog skin active peptide (FSAP) family. Bradykinin-related peptide subfamily. In terms of tissue distribution, expressed by the skin glands.

Its subcellular location is the secreted. Induces relaxation of rat smooth muscle from tail artery (EC(50)=16.8 nM) and contraction of that from ileum (EC(50)=205 nM), urinary bladder (EC(50)=895 nM) and uterus (EC(50)=60.3 nM). Binds to both bradykinin receptor B1 (BDKRB1) and B2 (BDKRB2). Functionally, [Hyp3,Thr6]-bradykinin: Induces relaxation of rat smooth muscle from tail artery (EC(50)=56.7 nM) and contraction of that from ileum (EC(50)=588 nM), urinary bladder (EC(50)=4.6 uM) and uterus (EC(50)=3.9 nM). Binds to both bradykinin receptor B1 (BDKRB1) and B2 (BDKRB2). In arterial smooth muscle, the effect via BDKRB1 is stronger, in uterus, ileum and urinary bladder the effect via BDKRB2. In terms of biological role, induces relaxation of rat smooth muscle from tail artery (EC(50)=10.8 nM) and contraction of that from ileum (EC(50)=645 nM), urinary bladder (EC(50)=1.1 uM) and uterus (EC(50)=1.2 uM). Binds to both bradykinin receptor B1 (BDKRB1) and B2 (BDKRB2). Apart from uterus smooth muscle, the effect via BDKRB2 is stronger. Its function is as follows. [Hyp3,Thr6]-bradykinyl-Val,Asp: Induces relaxation of rat smooth muscle from tail artery (EC(50)=3.5 nM) and contraction of that from ileum (EC(50)=223 nM), urinary bladder (EC(50)=1.5 uM) and uterus (EC(50)=356 nM). Binds to both bradykinin receptor B1 (BDKRB1) and B2 (BDKRB2); the effects via BDKRB2 are stronger. The sequence is that of [Thr6]-bradykinyl-Val,Asp from Agalychnis dacnicolor (Giant Mexican leaf frog).